The primary structure comprises 172 residues: 3-hydroxydecanoyl-[acyl-carrier-protein] dehydratase (172 aa).

Residue His71 is part of the active site.

The protein belongs to the thioester dehydratase family. FabA subfamily. Homodimer.

It localises to the cytoplasm. It carries out the reaction a (3R)-hydroxyacyl-[ACP] = a (2E)-enoyl-[ACP] + H2O. The catalysed reaction is (3R)-hydroxydecanoyl-[ACP] = (2E)-decenoyl-[ACP] + H2O. The enzyme catalyses (2E)-decenoyl-[ACP] = (3Z)-decenoyl-[ACP]. Its pathway is lipid metabolism; fatty acid biosynthesis. Its function is as follows. Necessary for the introduction of cis unsaturation into fatty acids. Catalyzes the dehydration of (3R)-3-hydroxydecanoyl-ACP to E-(2)-decenoyl-ACP and then its isomerization to Z-(3)-decenoyl-ACP. Can catalyze the dehydratase reaction for beta-hydroxyacyl-ACPs with saturated chain lengths up to 16:0, being most active on intermediate chain length. This is 3-hydroxydecanoyl-[acyl-carrier-protein] dehydratase from Vibrio parahaemolyticus serotype O3:K6 (strain RIMD 2210633).